The sequence spans 105 residues: uncharacterized protein (105 aa).

The Cupin type-2 domain maps to Leu-33–Phe-100.

This is an uncharacterized protein from Streptomyces coelicolor (strain ATCC BAA-471 / A3(2) / M145).